Consider the following 100-residue polypeptide: MHFTQREQDKLMIVVAAEVARRRKARGLKLNHPEALALISDELLEGARDGKTVAELMSYGKTILNEEDVMDGVANMITELEIEATFPDGTKLITVHHPIV.

Belongs to the urease gamma subunit family. As to quaternary structure, heterotrimer of UreA (gamma), UreB (beta) and UreC (alpha) subunits. Three heterotrimers associate to form the active enzyme.

It localises to the cytoplasm. It carries out the reaction urea + 2 H2O + H(+) = hydrogencarbonate + 2 NH4(+). It functions in the pathway nitrogen metabolism; urea degradation; CO(2) and NH(3) from urea (urease route): step 1/1. In Staphylococcus epidermidis (strain ATCC 35984 / DSM 28319 / BCRC 17069 / CCUG 31568 / BM 3577 / RP62A), this protein is Urease subunit gamma.